Consider the following 436-residue polypeptide: Peptidase B (436 aa).

Residues Lys201 and Asp206 each coordinate Mn(2+). Residue Lys213 is part of the active site. The Mn(2+) site is built by Asp224, Asp283, and Glu285. Arg287 is a catalytic residue.

The protein belongs to the peptidase M17 family. Homohexamer. Mn(2+) is required as a cofactor.

The protein resides in the cytoplasm. The catalysed reaction is Release of an N-terminal amino acid, Xaa, from a peptide or arylamide. Xaa is preferably Glu or Asp but may be other amino acids, including Leu, Met, His, Cys and Gln.. Its function is as follows. Probably plays an important role in intracellular peptide degradation. The polypeptide is Peptidase B (Pectobacterium atrosepticum (strain SCRI 1043 / ATCC BAA-672) (Erwinia carotovora subsp. atroseptica)).